A 350-amino-acid chain; its full sequence is Glycolate oxidase subunit GlcE (350 aa).

An FAD-binding PCMH-type domain is found at 1-173; it reads MLRECDYSQA…TEISMKVLPR (173 aa).

As to quaternary structure, the glycolate oxidase likely consists of three subunits, GlcD, GlcE and GlcF. The cofactor is FAD.

It is found in the cell inner membrane. The enzyme catalyses glycolate + A = glyoxylate + AH2. It catalyses the reaction (R)-lactate + A = pyruvate + AH2. With respect to regulation, in vitro the glycolate oxidase activity is inhibited by the sulfhydryl inhibitors CuSO4 and PCMB, by KCN, but not by the metal complexing agent EDTA. In terms of biological role, component of a complex that catalyzes the oxidation of glycolate to glyoxylate. Is required for E.coli to grow on glycolate as a sole source of carbon. Is also able to oxidize D-lactate ((R)-lactate) with a similar rate. Does not link directly to O(2), and 2,6-dichloroindophenol (DCIP) and phenazine methosulfate (PMS) can act as artificial electron acceptors in vitro, but the physiological molecule that functions as a primary electron acceptor during glycolate oxidation is unknown. The polypeptide is Glycolate oxidase subunit GlcE (Escherichia coli (strain K12)).